A 170-amino-acid polypeptide reads, in one-letter code: Cathelicidin antimicrobial peptide (170 aa).

A signal peptide spans 1–30; that stretch reads MKTQRDSPSLGRWSLVLLLLGLVMPLAIVA. A propeptide spans 31–131 (cathelin-like domain (CLD)); the sequence is QVLSYQEAVL…DISCDKDNRR (101 aa). Cystine bridges form between Cys86/Cys97 and Cys108/Cys125. Residues 150–162 are active core; it reads LKKVGQKIKDFLG.

The protein belongs to the cathelicidin family. As to quaternary structure, monomer, homodimer or homotrimer (in vitro). Oligomerizes as tetra- or hexamer in solution (in vitro). Post-translationally, proteolytically cleaved by proteinase PRTN3 into antibacterial peptide LL-37. Proteolytically cleaved by cathepsin CTSG and neutrophil elastase ELANE. Resistant to proteolytic degradation in solution, and when bound to both zwitterionic (mimicking mammalian membranes) and negatively charged membranes (mimicking bacterial membranes). In terms of processing, after secretion onto the skin surface, the CAMP gene product is processed by a serine protease-dependent mechanism into multiple novel antimicrobial peptides distinct from and shorter than cathelicidin LL-37. These peptides show enhanced antimicrobial action, acquiring the ability to kill skin pathogens such as S.aureus, E.coli and C.albicans. These peptides have lost the ability to stimulate CXCL8/IL8 release from keratinocytes. The peptides act synergistically, killing bacteria at lower concentrations when present together, and maintain activity at increased salt condition.

The protein localises to the secreted. It localises to the vesicle. In terms of biological role, antimicrobial protein that is an integral component of the innate immune system. Binds to bacterial lipopolysaccharides (LPS). Acts via neutrophil N-formyl peptide receptors to enhance the release of CXCL2. Postsecretory processing generates multiple cathelicidin antimicrobial peptides with various lengths which act as a topical antimicrobial defense in sweat on skin. The unprocessed precursor form, cathelicidin antimicrobial peptide, inhibits the growth of Gram-negative E.coli and E.aerogenes with efficiencies comparable to that of the mature peptide LL-37 (in vitro). Functionally, antimicrobial peptide that is an integral component of the innate immune system. Binds to bacterial lipopolysaccharides (LPS). Causes membrane permeabilization by forming transmembrane pores (in vitro). Causes lysis of E.coli. Exhibits antimicrobial activity against Gram-negative bacteria such as P.aeruginosa, S.typhimurium, E.aerogenes, E.coli and P.syringae, Gram-positive bacteria such as L.monocytogenes, S.epidermidis, S.pyogenes and S.aureus, as well as vancomycin-resistant enterococci (in vitro). Exhibits antimicrobial activity against methicillin-resistant S.aureus, P.mirabilis, and C.albicans in low-salt media, but not in media containing 100 mM NaCl (in vitro). Forms chiral supramolecular assemblies with quinolone signal (PQS) molecules of P.aeruginosa, which may lead to interference of bacterial quorum signaling and perturbance of bacterial biofilm formation. May form supramolecular fiber-like assemblies on bacterial membranes. Induces cytokine and chemokine producation as well as TNF/TNFA and CSF2/GMCSF production in normal human keratinocytes. Exhibits hemolytic activity against red blood cells. Exhibits antimicrobial activity against E.coli and B.megaterium (in vitro). The polypeptide is Cathelicidin antimicrobial peptide (Papio papio (Guinea baboon)).